We begin with the raw amino-acid sequence, 315 residues long: MENDKPFIVVLVGPTAVGKTEFSIELAKKYNGEIISGDSMQVYKNMDIGTAKITLDEMSGIPHQMIDILEPDEPFSAYEFKNRAQKLIKEITHRGRVPIIVGGTGLYIQSLIYDYAFEDETISEAHSESVETQLAELDQLSNDELHQYLASFDEISAQDIHPNNRKRVRRAIQYYLKTKKLLSSRKKVQQFTENYDTLLLGIEMSRDILYQRINTRVDIMLERGLLSEVKQLVENGYETSQSMQAIGYKEIVPVINGQISLDEATNKLKQHSRNYAKRQMTWFKNKLDVLWLDREKMSLSLMLDEVSVQIQKRRT.

Position 13 to 20 (Gly-13 to Thr-20) interacts with ATP. Thr-15 to Thr-20 contacts substrate. An interaction with substrate tRNA region spans residues Asp-38–Gln-41.

It belongs to the IPP transferase family. As to quaternary structure, monomer. Mg(2+) serves as cofactor.

It carries out the reaction adenosine(37) in tRNA + dimethylallyl diphosphate = N(6)-dimethylallyladenosine(37) in tRNA + diphosphate. Functionally, catalyzes the transfer of a dimethylallyl group onto the adenine at position 37 in tRNAs that read codons beginning with uridine, leading to the formation of N6-(dimethylallyl)adenosine (i(6)A). This is tRNA dimethylallyltransferase from Staphylococcus saprophyticus subsp. saprophyticus (strain ATCC 15305 / DSM 20229 / NCIMB 8711 / NCTC 7292 / S-41).